The primary structure comprises 591 residues: Protein CBFA2T3 (591 aa).

A disordered region spans residues 1–105 (MPGGTPRLEG…SSSASLSTHQ (105 aa)). The mediates localization to the nucleus stretch occupies residues 1–381 (MPGGTPRLEG…ADREELNHWI (381 aa)). The segment covering 41 to 52 (STPPNMPPPPPA) has biased composition (pro residues). Positions 55–105 (QGATRHPSFTPSTMMNGSSHSPTAINGAPSTPNGFSNGPATSSSASLSTHQ) are enriched in polar residues. The region spanning 112-207 (ARQLSKLKRF…SPAQYLAQHE (96 aa)) is the TAFH domain. Disordered stretches follow at residues 226 to 291 (LEVS…PPQH) and 386 to 420 (DAEDMKKGSPPSARPHNSSSSSEAPQLDVHRDFAP). A compositionally biased stretch (basic and acidic residues) spans 230 to 256 (ESGKRRTPDRTKENGLDRDPLHPEHLS). A compositionally biased stretch (polar residues) spans 263-274 (SPAQRYSPSNGL). Over residues 279-290 (NGLPHPPGPPPQ) the composition is skewed to pro residues. Residues 394–410 (SPPSARPHNSSSSSEAP) are compositionally biased toward low complexity. The stretch at 433–488 (RKAEEAVNEVKRQAMSELQKAVSDAERKAHELITTERAKMERALAEAKRQASEDAL) forms a coiled coil. Zn(2+) contacts are provided by C501, C504, C512, C515, C521, C525, H533, and C537. The segment at 501–537 (CWNCGRKASETCSGCNTARYCGSFCQHKDWEKHHHVC) adopts an MYND-type zinc-finger fold. The tract at residues 548–591 (SVPTAVGQPEAVPPMASSPSDAGSAGASRAGTPGTPAPLESASR) is disordered. Residues 560–585 (PPMASSPSDAGSAGASRAGTPGTPAP) are compositionally biased toward low complexity.

The protein belongs to the CBFA2T family.

Its subcellular location is the nucleus. It localises to the nucleolus. It is found in the nucleoplasm. The protein localises to the golgi apparatus. Its function is as follows. Functions as a transcriptional repressor. Regulates the proliferation and the differentiation of erythroid progenitors. Plays a role in granulocyte differentiation. May also function as an A-kinase-anchoring protein. This chain is Protein CBFA2T3 (CBFA2T3), found in Gallus gallus (Chicken).